We begin with the raw amino-acid sequence, 173 residues long: Alkyl hydroperoxide reductase AhpD (173 aa).

Cys-131 acts as the Proton donor in catalysis. Residues Cys-131 and Cys-134 are joined by a disulfide bond. The active-site Cysteine sulfenic acid (-SOH) intermediate is the Cys-134.

This sequence belongs to the AhpD family.

The enzyme catalyses N(6)-[(R)-dihydrolipoyl]-L-lysyl-[lipoyl-carrier protein] + a hydroperoxide = N(6)-[(R)-lipoyl]-L-lysyl-[lipoyl-carrier protein] + an alcohol + H2O. Antioxidant protein with alkyl hydroperoxidase activity. Required for the reduction of the AhpC active site cysteine residues and for the regeneration of the AhpC enzyme activity. The chain is Alkyl hydroperoxide reductase AhpD from Maricaulis maris (strain MCS10) (Caulobacter maris).